A 678-amino-acid chain; its full sequence is MLGAMAEEAVAPVAVPTTQEQPTSQPAAAQVTTVTSPSVTATAAAATAAVASPQANGNAASPVAPASSTSRPAEELTCMWQGCSEKLPTPESLYEHVCERHVGRKSTNNLNLTCQWGSCRTTTVKRDHITSHIRVHVPLKPHKCDFCGKAFKRPQDLKKHVKTHADDSVLVRSPEPGSRNPDMMFGGNGKGYAAAHYFEPALNPVPSQGYAHGPPQYYQAHHAPQPSNPSYGNVYYALNTGPEPHQASYESKKRGYDALNEFFGDLKRRQFDPNSYAAVGQRLLSLQNLSLPVLTAAPLPEYQAMPAPVAVASGPYGGGPHPAPAYHLPPMSNVRTKNDLINIDQFLQQMQDTIYENDDNVAAAGVAQPGAHYIHNGISYRTTHSPPTQLPSAHATTQTTAGPIISNTSAHSPSSSTPALTPPSSAQSYTSGRSPISLPSAHRVSPPHESGSSMYPRLPSATDGMTSGYTAASSAAPPSTLGGIFDNDERRRYTGGTLQRARPASRAASESMDLSSDDKESGERTPKQISASLIDPALHSGSPGEDDVTRTAKAATEVAERSDVQSEWVEKVRLIEYLRNYIANRLERGEFSDDSEQEQDQEQEQDQEQEQDQEQGQDRVSRSPVSKADVDMEGVERDSLPRSPRTVPIKTDGESAEDSVMYPTLRGLDEDGDSKMPS.

2 disordered regions span residues 1-31 (MLGA…AAQV) and 51-70 (ASPQ…SSTS). C2H2-type zinc fingers lie at residues 76–101 (LTCM…CERH), 112–136 (LTCQ…IRVH), and 142–164 (HKCD…VKTH). The Nuclear localization signal motif lies at 158-164 (KKHVKTH). The tract at residues 169-301 (VLVRSPEPGS…PVLTAAPLPE (133 aa)) is interacting region A. Positions 252 to 254 (KKR) are processing protease cleavage. A propeptide spans 253 to 493 (KRGYDALNEF…IFDNDERRRY (241 aa)) (removed in open form 1; by processing protease). The interacting region B stretch occupies residues 334–410 (VRTKNDLINI…AGPIISNTSA (77 aa)). Disordered stretches follow at residues 377–565 (GISY…SDVQ) and 590–678 (EFSD…KMPS). A compositionally biased stretch (polar residues) spans 379–401 (SYRTTHSPPTQLPSAHATTQTTA). The segment covering 406-428 (SNTSAHSPSSSTPALTPPSSAQS) has biased composition (low complexity). The YPX[LI] motif 1 motif lies at 455–458 (YPRL). Residues 479 to 502 (STLGGIFDNDERRRYTGGTLQRAR) form a signaling protease box region. Positions 493–500 (YTGGTLQR) are signaling protease cleavage. The propeptide at 494–678 (TGGTLQRARP…DEDGDSKMPS (185 aa)) is removed in open form 2; by signaling protease. The span at 500–511 (RARPASRAASES) shows a compositional bias: low complexity. Residues 516-526 (SDDKESGERTP) show a composition bias toward basic and acidic residues. An interacting region C region spans residues 529–592 (ISASLIDPAL…ANRLERGEFS (64 aa)). Acidic residues predominate over residues 592–615 (SDDSEQEQDQEQEQDQEQEQDQEQ). Residues 628–640 (ADVDMEGVERDSL) show a composition bias toward basic and acidic residues. A YPX[LI] motif 2 motif is present at residues 662-665 (YPTL).

This sequence belongs to the pacC/RIM101 family. As to quaternary structure, binds to DNA. Interacts with palA, which binds to the two YPX[LI] motifs and is required for proteolytic processing. Activated by C-terminal proteolytic cleavage. At neutral to alkaline ambient pH, the signaling protease (probably palB) cleaves pacC within the conserved 24-residue signaling protease box, removing the C-terminal interacting region C and producing a 53 kDa 'open' conformation intermediate protein, which is committed to further processing. In an ambient pH-independent reaction, the processing protease (probably the proteasome) removes additional C-terminal residues to yield the 27 kDa functional form.

Its subcellular location is the cytoplasm. It localises to the nucleus. Transcription factor that mediates regulation of both acid- and alkaline-expressed genes in response to ambient pH. At alkaline ambient pH, activates transcription of alkaline-expressed genes (including pacC itself) and represses transcription of acid-expressed genes. Specifically recognizes and binds the consensus sequence 5'-GCCARG-3'. Required for virulence in invasive pulmonary aspergillosis (IPA). The polypeptide is pH-response transcription factor pacC/RIM101 (pacC) (Emericella nidulans (strain FGSC A4 / ATCC 38163 / CBS 112.46 / NRRL 194 / M139) (Aspergillus nidulans)).